Reading from the N-terminus, the 1320-residue chain is Sister chromatid cohesion protein PDS5 homolog A (1320 aa).

5 HEAT repeats span residues 156–195 (NEIF…EGDG), 272–310 (PLLL…AKDS), 388–426 (NLVN…KYCL), 709–747 (PQIR…NKEV), and 990–1028 (SLLP…CLWF). Polar residues predominate over residues 1158-1179 (TFTSETGSNASTNSQPSSPATN). The interval 1158 to 1320 (TFTSETGSNA…APQRQIDLQR (163 aa)) is disordered. Residues 1180–1194 (KSRDVSSEVGARENE) show a composition bias toward basic and acidic residues. Polar residues predominate over residues 1225–1241 (GTENSVSSNPSAGSQPP). Residues 1255-1267 (AGAATQEKEAGAT) are compositionally biased toward low complexity. Positions 1283–1293 (QDPSSTASTDA) are enriched in polar residues. The segment covering 1294 to 1309 (LSDKTPKQQKEAEPKR) has biased composition (basic and acidic residues).

Belongs to the PDS5 family. As to quaternary structure, interacts with the cohesin complex. Binds chromatin in a cohesin-dependent manner.

The protein resides in the nucleus. Functionally, may regulate sister chromatid cohesion during mitosis and couple it to DNA replication. In Danio rerio (Zebrafish), this protein is Sister chromatid cohesion protein PDS5 homolog A.